The following is a 127-amino-acid chain: MDTMGRHVIAELWGCDVDKLNDLSFIEQVFVDAALKAGAEVREVAFHKFAPQGISGVVIISESHLTIHSFPEHGYASIDVYTCGDRIDPNVASNYIAEALKATATEVVELPRGMGPIQLEKPKVKVL.

S63 serves as the catalytic Schiff-base intermediate with substrate; via pyruvic acid. S63 carries the post-translational modification Pyruvic acid (Ser); by autocatalysis. Residue H68 is the Proton acceptor; for processing activity of the active site. The active-site Proton donor; for catalytic activity is the C83.

It belongs to the prokaryotic AdoMetDC family. Type 1 subfamily. Heterotetramer of two alpha and two beta chains arranged as a dimer of alpha/beta heterodimers. Pyruvate is required as a cofactor. Is synthesized initially as an inactive proenzyme. Formation of the active enzyme involves a self-maturation process in which the active site pyruvoyl group is generated from an internal serine residue via an autocatalytic post-translational modification. Two non-identical subunits are generated from the proenzyme in this reaction, and the pyruvate is formed at the N-terminus of the alpha chain, which is derived from the carboxyl end of the proenzyme. The post-translation cleavage follows an unusual pathway, termed non-hydrolytic serinolysis, in which the side chain hydroxyl group of the serine supplies its oxygen atom to form the C-terminus of the beta chain, while the remainder of the serine residue undergoes an oxidative deamination to produce ammonia and the pyruvoyl group blocking the N-terminus of the alpha chain.

It carries out the reaction S-adenosyl-L-methionine + H(+) = S-adenosyl 3-(methylsulfanyl)propylamine + CO2. It functions in the pathway amine and polyamine biosynthesis; S-adenosylmethioninamine biosynthesis; S-adenosylmethioninamine from S-adenosyl-L-methionine: step 1/1. In terms of biological role, catalyzes the decarboxylation of S-adenosylmethionine to S-adenosylmethioninamine (dcAdoMet), the propylamine donor required for the synthesis of the polyamines spermine and spermidine from the diamine putrescine. The chain is S-adenosylmethionine decarboxylase proenzyme 2 from Halalkalibacterium halodurans (strain ATCC BAA-125 / DSM 18197 / FERM 7344 / JCM 9153 / C-125) (Bacillus halodurans).